Reading from the N-terminus, the 267-residue chain is Tetrahydromethanopterin S-methyltransferase subunit C (267 aa).

8 helical membrane-spanning segments follow: residues 18 to 38 (LMAL…VNPV), 39 to 59 (IGPV…ADAI), 76 to 96 (YMSV…VFVV), 99 to 119 (IAVP…VAVL), 138 to 158 (ISGA…GSYT), 163 to 183 (LTSV…TMAI), 209 to 229 (FISM…WWLV), and 230 to 250 (SLIG…ASFE).

It belongs to the MtrC family. As to quaternary structure, the complex is composed of 8 subunits; MtrA, MtrB, MtrC, MtrD, MtrE, MtrF, MtrG and MtrH.

The protein localises to the cell membrane. The catalysed reaction is 5-methyl-5,6,7,8-tetrahydromethanopterin + coenzyme M + 2 Na(+)(in) = 5,6,7,8-tetrahydromethanopterin + methyl-coenzyme M + 2 Na(+)(out). The protein operates within one-carbon metabolism; methanogenesis from CO(2); methyl-coenzyme M from 5,10-methylene-5,6,7,8-tetrahydromethanopterin: step 2/2. Part of a complex that catalyzes the formation of methyl-coenzyme M and tetrahydromethanopterin from coenzyme M and methyl-tetrahydromethanopterin. This is an energy-conserving, sodium-ion translocating step. The sequence is that of Tetrahydromethanopterin S-methyltransferase subunit C from Methanothermobacter marburgensis (strain ATCC BAA-927 / DSM 2133 / JCM 14651 / NBRC 100331 / OCM 82 / Marburg) (Methanobacterium thermoautotrophicum).